A 499-amino-acid chain; its full sequence is WD repeat-containing protein 55 homolog (499 aa).

The disordered stretch occupies residues 1–130 (MHTHNNFKTP…EATFDLDVDD (130 aa)). Composition is skewed to acidic residues over residues 12–23 (DEDELDDLDEDM) and 31–48 (IEQE…EYDL). Low complexity predominate over residues 91-103 (DDAGGASAGGATS). Residues 113 to 122 (PSGSNRQSEA) are compositionally biased toward polar residues. WD repeat units lie at residues 154–193 (KLED…NKLL), 198–237 (VHSK…LKKL), 241–279 (AHDD…AIFE), 282–321 (ELED…MYVQ), 324–363 (PYEE…YHCD), and 408–447 (QHNM…DFGD). The disordered stretch occupies residues 480 to 499 (TKEDADDDDHDPSAGPSNMA).

It belongs to the WD repeat WDR55 family.

This chain is WD repeat-containing protein 55 homolog, found in Drosophila yakuba (Fruit fly).